A 64-amino-acid chain; its full sequence is Large ribosomal subunit protein uL29 (64 aa).

Belongs to the universal ribosomal protein uL29 family.

The protein is Large ribosomal subunit protein uL29 of Porphyromonas gingivalis (strain ATCC 33277 / DSM 20709 / CIP 103683 / JCM 12257 / NCTC 11834 / 2561).